Here is a 433-residue protein sequence, read N- to C-terminus: Chaperone SurA (433 aa).

The signal sequence occupies residues 1–24; sequence MDGIKLLLSIIILYFYTYINCAIA. 2 PpiC domains span residues 173–274 and 285–385; these read NTTF…KVHD and ITEV…QLQN.

The protein resides in the periplasm. The enzyme catalyses [protein]-peptidylproline (omega=180) = [protein]-peptidylproline (omega=0). Its function is as follows. Chaperone involved in the correct folding and assembly of outer membrane proteins. Recognizes specific patterns of aromatic residues and the orientation of their side chains, which are found more frequently in integral outer membrane proteins. May act in both early periplasmic and late outer membrane-associated steps of protein maturation. This is Chaperone SurA from Baumannia cicadellinicola subsp. Homalodisca coagulata.